We begin with the raw amino-acid sequence, 857 residues long: Leucine--tRNA ligase (857 aa).

Residues 42-52 (PYPSGKLHMGH) carry the 'HIGH' region motif. The 'KMSKS' region signature appears at 620 to 624 (KMSKS). K623 contributes to the ATP binding site.

The protein belongs to the class-I aminoacyl-tRNA synthetase family.

The protein resides in the cytoplasm. The enzyme catalyses tRNA(Leu) + L-leucine + ATP = L-leucyl-tRNA(Leu) + AMP + diphosphate. The chain is Leucine--tRNA ligase from Thiobacillus denitrificans (strain ATCC 25259 / T1).